Here is an 820-residue protein sequence, read N- to C-terminus: Quinate repressor protein (820 aa).

The tract at residues 25–79 is disordered; sequence SFEQMLLQQDSNESSRRTSPSRTHSRVDLERHSSHIVSLSSSNGSPSLEDPENRL. Low complexity predominate over residues 59–71; the sequence is HIVSLSSSNGSPS.

It in the N-terminal section; belongs to the shikimate kinase family. The protein in the 2nd section; belongs to the type-I 3-dehydroquinase family. In the C-terminal section; belongs to the shikimate dehydrogenase family. As to quaternary structure, interacts with qutA; transcriptional activator of the quinate utilization pathway genes.

Functionally, multi-domain repressor protein that negatively regulates transcription of the quinate utilization pathway genes. May mediate its repressor activity by binding directly to the qutA activator protein. This Talaromyces stipitatus (strain ATCC 10500 / CBS 375.48 / QM 6759 / NRRL 1006) (Penicillium stipitatum) protein is Quinate repressor protein (qutR).